The primary structure comprises 303 residues: MRHSTTLTGCATGAAGLLAATAAAAQQQSLEIIGRPQPGGTGFQPSASPVATQIHWLDGFILVIIAAITIFVTLLILYAVWRFHEKRNKVPARFTHNSPLEIAWTIVPIVILVAIGAFSLPVLFNQQEIPEADVTVKVTGYQWYWGYEYPDEEISFESYMIGSPATGGDNRMSPEVEQQLIEAGYSRDEFLLATDTAMVVPVNKTVVVQVTGADVIHSWTVPAFGVKQDAVPGRLAQLWFRAEREGIFFGQCSELCGISHAYMPITVKVVSEEAYAAWLEQARGGTYELSSVLPATPAGVSVE.

Residues 1 to 25 (MRHSTTLTGCATGAAGLLAATAAAA) form the signal peptide. 2 consecutive transmembrane segments (helical) span residues 60-80 (FILVIIAAITIFVTLLILYAV) and 104-124 (WTIVPIVILVAIGAFSLPVLF). The Cu cation site is built by His-217, Cys-252, Cys-256, and His-260.

This sequence belongs to the cytochrome c oxidase subunit 2 family. Requires Cu cation as cofactor.

The protein resides in the cell membrane. The enzyme catalyses 4 Fe(II)-[cytochrome c] + O2 + 8 H(+)(in) = 4 Fe(III)-[cytochrome c] + 2 H2O + 4 H(+)(out). Subunits I and II form the functional core of the enzyme complex. Electrons originating in cytochrome c are transferred via heme a and Cu(A) to the binuclear center formed by heme a3 and Cu(B). The chain is Cytochrome c oxidase subunit 2 (ctaC) from Cereibacter sphaeroides (Rhodobacter sphaeroides).